The following is a 514-amino-acid chain: 2-isopropylmalate synthase (514 aa).

In terms of domain architecture, Pyruvate carboxyltransferase spans 5–267; it reads LVIFDTTLRD…DTRIHTPEIL (263 aa). Mn(2+) is bound by residues Asp14, His202, His204, and Asn238. Positions 394 to 514 are regulatory domain; it reads RLVALKVGTQ…GSKEHPQAHV (121 aa).

It belongs to the alpha-IPM synthase/homocitrate synthase family. LeuA type 1 subfamily. In terms of assembly, homodimer. It depends on Mn(2+) as a cofactor.

It is found in the cytoplasm. The enzyme catalyses 3-methyl-2-oxobutanoate + acetyl-CoA + H2O = (2S)-2-isopropylmalate + CoA + H(+). It functions in the pathway amino-acid biosynthesis; L-leucine biosynthesis; L-leucine from 3-methyl-2-oxobutanoate: step 1/4. In terms of biological role, catalyzes the condensation of the acetyl group of acetyl-CoA with 3-methyl-2-oxobutanoate (2-ketoisovalerate) to form 3-carboxy-3-hydroxy-4-methylpentanoate (2-isopropylmalate). In Hydrogenovibrio crunogenus (strain DSM 25203 / XCL-2) (Thiomicrospira crunogena), this protein is 2-isopropylmalate synthase.